The sequence spans 581 residues: Terpene synthase 2, chloroplastic (581 aa).

A chloroplast-targeting transit peptide spans Met1–Ala34. 4 residues coordinate substrate: Arg299, Asp336, Asp340, and Arg480. Positions 336 and 340 each coordinate Mg(2+). The short motif at Asp336–Asp340 is the DDXXD motif element. Mg(2+) is bound by residues Asp483, Ser487, and Glu491.

Belongs to the terpene synthase family. In terms of assembly, monomer. Requires Mg(2+) as cofactor.

Its subcellular location is the plastid. It is found in the chloroplast. The enzyme catalyses (2E,6E)-farnesyl diphosphate + H2O = (3S,6E)-nerolidol + diphosphate. The catalysed reaction is (2E,6E,10E)-geranylgeranyl diphosphate + H2O = (6E,10E)-geranyllinalool + diphosphate. It carries out the reaction (2E)-geranyl diphosphate + H2O = (S)-linalool + diphosphate. It functions in the pathway secondary metabolite biosynthesis; terpenoid biosynthesis. Its function is as follows. Involved in sesquiterpene (C15), diterpene (C20) and monoterpene (C10) biosynthesis. Has sesquiterpene synthase activity, converting farnesyl diphosphate to nerolidol, the precursor of the volatile C11-homoterpene (E)-3,8-dimethyl-1,4,7-nonatriene (DMNT). Has diterpene synthase activity, converting geranylgeranyl diphosphate to (E,E)-geranyllinalool, the precursor of the volatile C16-homoterpene (E,E)-4,8,12-trimethyltrideca 1,3,7,11-tetraene (TMTT). Has monoterpene synthase activity, converting geranyl diphosphate into linalool. Forms only the S-isomers of the three tertiary terpene alcohols. The polypeptide is Terpene synthase 2, chloroplastic (Zea mays (Maize)).